We begin with the raw amino-acid sequence, 1032 residues long: Toll-like receptor 9 (1032 aa).

Residues 1-25 form the signal peptide; it reads MGFCRSALHPLSLLVQAIMLAMTLA. At 26–818 the chain is on the extracellular side; sequence LGTLPAFLPC…CLDEALSWDC (793 aa). Cysteine 35 and cysteine 45 are disulfide-bonded. Position 47-51 (47-51) interacts with DNA; sequence WLFLK. 14 LRR repeats span residues 62–85, 87–110, 122–147, 150–166, 167–190, 198–221, 223–242, 243–268, 283–306, 308–332, 333–356, 363–386, 390–413, and 415–440; these read RGNVTSLSLSSNRIHHLHDSDFAH, PSLRHLNLKWNCPPVGLSPMHFPC, VPTLEELNLSYNNIMTVPALPKSLIS, LSHTNILMLDSASLAGL, HALRFLFMDGNCYYKNPCRQALEV, LGNLTHLSLKYNNLTVVPRNLPSS, EYLLLSYNRIVKLAPEDLAN, LTALRVLDVGGNCRRCDHAPNPCMEC, LSRLEGLVLKDSSLSWLNASWFRG, GNLRVLDLSENFLYKCITKTKAFQG, LTQLRKLNLSFNYQKRVSFAHLSL, LVALKELDMHGIFFRSLDETTLRP, LPMLQTLRLQMNFINQAQLGIFRA, and PGLRYVDLSDNRISGASELTATMGEA. Asparagine 64 carries an N-linked (GlcNAc...) asparagine glycan. DNA is bound by residues 72–77 and 95–109; these read SNRIHH and KWNCPPVGLSPMHFP. Cysteine 98 and cysteine 110 are oxidised to a cystine. N-linked (GlcNAc...) asparagine glycosylation occurs at asparagine 129. Tyrosine 132 lines the DNA pocket. A disulfide bridge links cysteine 178 with cysteine 184. A DNA-binding site is contributed by 179–181; the sequence is YYK. An N-linked (GlcNAc...) asparagine glycan is attached at asparagine 200. Tyrosine 208 lines the DNA pocket. N-linked (GlcNAc...) asparagine glycosylation is found at asparagine 210 and asparagine 242. 2 cysteine pairs are disulfide-bonded: cysteine 255/cysteine 268 and cysteine 258/cysteine 265. Residues cysteine 258 and cysteine 265 are each lipidated (S-palmitoyl cysteine). A glycan (N-linked (GlcNAc...) asparagine) is linked at asparagine 300. N-linked (GlcNAc...) asparagine glycosylation occurs at asparagine 340. N-linked (GlcNAc...) asparagine glycosylation is found at asparagine 469, asparagine 474, and asparagine 513. LRR repeat units lie at residues 470 to 494, 496 to 519, 520 to 543, 545 to 572, 574 to 598, 600 to 622, 627 to 650, 652 to 675, 676 to 699, 701 to 723, 724 to 747, and 749 to 772; these read CSTLNFTLDLSRNNLVTVQPEMFAQ, SHLQCLRLSHNCISQAVNGSQFLP, LTGLQVLDLSHNKLDLYHEHSFTE, PRLEALDLSYNSQPFGMQGVGHNFSFVA, LRTLRHLSLAHNNIHSQVSQQLCST, LRALDFSGNALGHMWAEGDLYLH, LSGLIWLDLSQNRLHTLLPQTLRN, PKSLQVLRLRDNYLAFFKWWSLHF, LPKLEVLDLAGNQLKALTNGSLPA, TRLRRLDVSCNSISFVAPGFFSK, AKELRELNLSANALKTVDHSWFGP, and ASALQILDVSANPLHCACGAAFMD. Residues cysteine 470 and cysteine 500 are joined by a disulfide bond. Asparagine 567 carries an N-linked (GlcNAc...) asparagine glycan. Asparagine 694 carries an N-linked (GlcNAc...) asparagine glycan. Asparagine 731 carries N-linked (GlcNAc...) asparagine glycosylation. Disulfide bonds link cysteine 764–cysteine 790 and cysteine 766–cysteine 809. A helical membrane pass occupies residues 819 to 839; that stretch reads FALSLLAVALGLGVPMLHHLC. The Cytoplasmic portion of the chain corresponds to 840–1032; sequence GWDLWYCFHL…RNFCQGPTAE (193 aa). Residues 868-1013 form the TIR domain; that stretch reads LPYDAFVVFD…SFWAQLGMAL (146 aa).

Belongs to the Toll-like receptor family. As to quaternary structure, monomer and homodimer. Exists as a monomer in the absence of unmethylated cytidine-phosphate-guanosine (CpG) ligand. Proteolytic processing of an insertion loop (Z-loop) is required for homodimerization upon binding to the unmethylated CpG ligand leading to its activation. Interacts with MYD88 via their respective TIR domains. Interacts with BTK. Interacts (via transmembrane domain) with UNC93B1. Interacts with CD300LH; the interaction may promote full activation of TLR9-triggered innate responses. Interacts with CNPY3 and HSP90B1; this interaction is required for proper folding in the endoplasmic reticulum. Interacts with SMPDL3B. Interacts with CD82; this interaction is essential for TLR9-dependent myddosome formation in response to CpG stimulation. Post-translationally, activated by proteolytic cleavage of the flexible loop between repeats LRR14 and LRR15 within the ectodomain. Cleavage requires UNC93B1. Proteolytically processed by first removing the majority of the ectodomain by either asparagine endopeptidase (AEP) or a cathepsin followed by a trimming event that is solely cathepsin mediated and required for optimal receptor signaling. In terms of processing, palmitoylated by ZDHHC3 in the Golgi regulates TLR9 trafficking from the Golgi to endosomes. Depalmitoylation by PPT1 controls the release of TLR9 from UNC93B1 in endosomes. In terms of tissue distribution, highly expressed in spleen, lymph node, tonsil and peripheral blood leukocytes, especially in plasmacytoid pre-dendritic cells. Levels are much lower in monocytes and CD11c+ immature dendritic cells. Also detected in lung and liver.

It is found in the endoplasmic reticulum membrane. The protein localises to the early endosome membrane. It localises to the lysosome. Its subcellular location is the cytoplasmic vesicle. The protein resides in the phagosome. It is found in the golgi apparatus membrane. Key component of innate and adaptive immunity. TLRs (Toll-like receptors) control host immune response against pathogens through recognition of molecular patterns specific to microorganisms. TLR9 is a nucleotide-sensing TLR which is activated by unmethylated cytidine-phosphate-guanosine (CpG) dinucleotides. Acts via MYD88 and TRAF6, leading to NF-kappa-B activation, cytokine secretion and the inflammatory response. Controls lymphocyte response to Helicobacter infection. Upon CpG stimulation, induces B-cell proliferation, activation, survival and antibody production. The protein is Toll-like receptor 9 (TLR9) of Homo sapiens (Human).